Reading from the N-terminus, the 170-residue chain is Photosystem II extrinsic protein V (170 aa).

The N-terminal stretch at 1–33 is a signal peptide; that stretch reads MASLFASLGRSLIKLLIVLPVIIGLSISSPAMA. Residues Cys-70, Cys-73, His-74, and His-125 each contribute to the heme c site.

This sequence belongs to the cytochrome c family. PsbV subfamily. As to quaternary structure, PSII is composed of 1 copy each of membrane proteins PsbA, PsbB, PsbC, PsbD, PsbE, PsbF, PsbH, PsbI, PsbJ, PsbK, PsbL, PsbM, PsbT, PsbX, PsbY, Psb30/Ycf12, peripheral proteins PsbO, CyanoQ (PsbQ), PsbU, PsbV and a large number of cofactors. It forms dimeric complexes. Heme c serves as cofactor.

It localises to the cellular thylakoid membrane. In terms of biological role, one of the extrinsic, lumenal subunits of photosystem II (PSII). PSII is a light-driven water plastoquinone oxidoreductase, using light energy to abstract electrons from H(2)O, generating a proton gradient subsequently used for ATP formation. The extrinsic proteins stabilize the structure of photosystem II oxygen-evolving complex (OEC), the ion environment of oxygen evolution and protect the OEC against heat-induced inactivation. Low-potential cytochrome c that plays a role in the OEC of PSII. The chain is Photosystem II extrinsic protein V from Prochlorococcus marinus (strain MIT 9303).